The chain runs to 605 residues: UvrABC system protein C (605 aa).

One can recognise a GIY-YIG domain in the interval 13 to 92 (SEPGVYLMKD…IKRYRPKYNV (80 aa)). The 36-residue stretch at 205–240 (EKLMELLKEKMNESSMNFRFEEAAVYRDKIKSLEEM) folds into the UVR domain.

Belongs to the UvrC family. Interacts with UvrB in an incision complex.

It is found in the cytoplasm. The UvrABC repair system catalyzes the recognition and processing of DNA lesions. UvrC both incises the 5' and 3' sides of the lesion. The N-terminal half is responsible for the 3' incision and the C-terminal half is responsible for the 5' incision. In Clostridioides difficile (strain 630) (Peptoclostridium difficile), this protein is UvrABC system protein C.